The chain runs to 311 residues: Glycine--tRNA ligase alpha subunit (311 aa).

This sequence belongs to the class-II aminoacyl-tRNA synthetase family. As to quaternary structure, tetramer of two alpha and two beta subunits.

The protein resides in the cytoplasm. The enzyme catalyses tRNA(Gly) + glycine + ATP = glycyl-tRNA(Gly) + AMP + diphosphate. In Brucella anthropi (strain ATCC 49188 / DSM 6882 / CCUG 24695 / JCM 21032 / LMG 3331 / NBRC 15819 / NCTC 12168 / Alc 37) (Ochrobactrum anthropi), this protein is Glycine--tRNA ligase alpha subunit.